Here is a 1293-residue protein sequence, read N- to C-terminus: Enterobactin synthase component F (1293 aa).

Residues 1–301 (MSQHLPLVAA…NVLPLGIHIA (301 aa)) are elongation/condensation. An adenylation region spans residues 482–887 (SYREMREQVV…ALPDVEQAVT (406 aa)). Residues 971 to 1046 (APKAGSETII…KLATIIDGEE (76 aa)) form the Carrier domain. Ser-1006 carries the O-(pantetheine 4'-phosphoryl)serine modification. A thioesterase region spans residues 1066-1293 (PTLFCFHPAS…GPIIRATLNR (228 aa)). His-1271 serves as the catalytic Proton acceptor; for thioesterase activity.

The protein belongs to the ATP-dependent AMP-binding enzyme family. EntF subfamily. As to quaternary structure, proteins EntB, EntD, EntE and EntF are the component of the enterobactin synthase. Components probably do not form a stable complex. EntF acts as a catalytic monomer. The cofactor is pantetheine 4'-phosphate. In terms of processing, 4'-phosphopantetheine is transferred from CoA to a specific serine of apo-EntF by EntD. Holo-EntF so formed is then acylated with seryl-AMP.

Its subcellular location is the cytoplasm. It catalyses the reaction 3 2,3-dihydroxybenzoate + 3 L-serine + 6 ATP = enterobactin + 6 AMP + 6 diphosphate + 4 H(+). The catalysed reaction is holo-[peptidyl-carrier protein] + L-serine + ATP = L-seryl-[peptidyl-carrier protein] + AMP + diphosphate. It participates in siderophore biosynthesis; enterobactin biosynthesis. Involved in the biosynthesis of the siderophore enterobactin (enterochelin), which is a macrocyclic trimeric lactone of N-(2,3-dihydroxybenzoyl)-serine. EntF catalyzes the activation of L-serine via ATP-dependent PPi exchange reaction to form seryladenylate. Activated L-serine is loaded onto the peptidyl carrier domain via a thioester linkage to the phosphopanthetheine moiety, forming seryl-S-Ppant-EntF. EntF acts then as the sole catalyst for the formation of the three amide and three ester linkages found in enterobactin, using seryladenylate and 2,3-dihydroxybenzoate-S-Ppant-EntB (DHB-S-Ppant-EntB) as substrates, via the formation of a DHB-Ser-S-Ppant-EntF intermediate. The polypeptide is Enterobactin synthase component F (entF) (Escherichia coli O157:H7).